Reading from the N-terminus, the 128-residue chain is Cytochrome c-type biogenesis protein CcmE (128 aa).

Over 1-8 (MQKRVRNR) the chain is Cytoplasmic. Residues 9–29 (LITIIICFCSAFLGISIILYN) form a helical; Signal-anchor for type II membrane protein membrane-spanning segment. The Periplasmic segment spans residues 30–128 (LEKNIVFFLP…KHDENYRPPQ (99 aa)). Heme is bound by residues His-120 and Tyr-124.

This sequence belongs to the CcmE/CycJ family.

The protein resides in the cell inner membrane. In terms of biological role, heme chaperone required for the biogenesis of c-type cytochromes. Transiently binds heme delivered by CcmC and transfers the heme to apo-cytochromes in a process facilitated by CcmF and CcmH. This is Cytochrome c-type biogenesis protein CcmE from Rickettsia rickettsii (strain Iowa).